Consider the following 389-residue polypeptide: Formate-dependent phosphoribosylglycinamide formyltransferase (389 aa).

Residues 15–16 (EL) and glutamate 75 each bind N(1)-(5-phospho-beta-D-ribosyl)glycinamide. Residues arginine 107, lysine 148, 153–158 (SSGKGQ), 188–191 (EEFL), and glutamate 196 each bind ATP. The region spanning 112 to 302 (DLAAGELALR…EFELHLRAVL (191 aa)) is the ATP-grasp domain. The Mg(2+) site is built by glutamate 261 and glutamate 273. Residues aspartate 280, lysine 350, and 357–358 (RR) contribute to the N(1)-(5-phospho-beta-D-ribosyl)glycinamide site.

It belongs to the PurK/PurT family. In terms of assembly, homodimer.

The catalysed reaction is N(1)-(5-phospho-beta-D-ribosyl)glycinamide + formate + ATP = N(2)-formyl-N(1)-(5-phospho-beta-D-ribosyl)glycinamide + ADP + phosphate + H(+). It functions in the pathway purine metabolism; IMP biosynthesis via de novo pathway; N(2)-formyl-N(1)-(5-phospho-D-ribosyl)glycinamide from N(1)-(5-phospho-D-ribosyl)glycinamide (formate route): step 1/1. Functionally, involved in the de novo purine biosynthesis. Catalyzes the transfer of formate to 5-phospho-ribosyl-glycinamide (GAR), producing 5-phospho-ribosyl-N-formylglycinamide (FGAR). Formate is provided by PurU via hydrolysis of 10-formyl-tetrahydrofolate. This Synechococcus sp. (strain WH7803) protein is Formate-dependent phosphoribosylglycinamide formyltransferase.